Here is a 232-residue protein sequence, read N- to C-terminus: Nuclear transcription factor Y subunit nfyc-1 (232 aa).

Residues 191–232 (TVPTTSTNGPGHMSEDSFQDPNMHSDFHQRTSNSSVNRSHHN) form a disordered region. The segment covering 220-232 (RTSNSSVNRSHHN) has biased composition (polar residues).

Belongs to the NFYC/HAP5 subunit family. As to quaternary structure, forms two NF-Y heterotrimeric transcription factor complexes: the nfya-1-NF-Y complex is composed of nfya-1, nfyb-1 and nfyc-1, and the nfya-2-NF-Y complex is composed of nfya-2, nfyb-1 and nfyc-1. Interacts with nfyb-1; the interaction is direct and is required for the interaction with either nfya-1 or nfya-2, and subsequent binding of the complex to the 5'-CCAAT-3' box motif in DNA. Expressed in certain parts of the gonads with high expression in fertilized oocytes in the uterus and mature oocytes from the distal to the proximal arm of the gonad, but weak expression in the syncytial ovaries and immature oocytes at the beginning of the proximal arm of the gonad. Expressed in the excretory cell, secretory cells in the pharyngeal terminal bulb wall, in the small ganglia surrounding the pharynx and in the neurons running anteriorly to the sensory organs in the head. Not expressed in the intestine, the hypodermis or body wall muscle surrounding the pseudocoelomic space.

It is found in the nucleus. The protein localises to the cytoplasm. It localises to the perikaryon. Component of sequence-specific heterotrimeric transcription factor (nfya-1-NF-Y and nfya-2-NF-Y) complexes which specifically recognize a 5'-CCAAT-3' box motif found in the promoters of its target genes to regulate their expression and control cellular identity in particular tissue types. In association with the components in the NF-Y complexes, represses the expression of the T-box transcription factor tbx-2 throughout larval development, which most likely restricts its expression to certain tissues. May act to repress txb-2 expression in conjunction with tbx-2 itself, which has an autoregulatory role. In association with the components in the nfya-1-NF-Y complex, negatively regulates the expression of the homeobox protein egl-5 to spatially restrict its expression in tissues such as the head. May regulate egl-5 expression in association with the mes-2-mes-3-mes-6 complex. The chain is Nuclear transcription factor Y subunit nfyc-1 from Caenorhabditis elegans.